An 856-amino-acid polypeptide reads, in one-letter code: Mechanosensitive ion channel protein 6 (856 aa).

Disordered regions lie at residues 45–86 and 116–226; these read GEGN…DPPT and RGLT…PFAA. 2 stretches are compositionally biased toward basic and acidic residues: residues 70-85 and 129-140; these read QQKDEGFEFRRGEDPP and TKRDPVGRRDSR. Positions 155 to 168 are enriched in polar residues; the sequence is SGNNAPIQRSSSTL. Position 211 is a phosphoserine (S211). The segment covering 217 to 226 has biased composition (acidic residues); it reads EEEEDDPFAA. The next 4 helical transmembrane spans lie at 242–262, 283–303, 323–343, and 360–380; these read IVLEWLSLILIIAGFVCTLAI, LVLICGRLVSSWIVKIVVFFI, AVQNCLWLGLVLLAWHFLFDE, and IFVCLLVGFLLWLVKTLLVKV. S462 is modified (phosphoserine). Helical transmembrane passes span 615–635 and 651–671; these read MVNIVVGIIILVIWLIILGIT and AFIFGNMCKIVFESIIYLFVI.

It belongs to the MscS (TC 1.A.23) family.

It localises to the membrane. Functionally, mechanosensitive channel that opens in response to stretch forces in the membrane lipid bilayer. This chain is Mechanosensitive ion channel protein 6 (MSL6), found in Arabidopsis thaliana (Mouse-ear cress).